Consider the following 1363-residue polypeptide: Spike glycoprotein (1363 aa).

A signal peptide spans 1–13; the sequence is MFLILLISLPTAF. The Extracellular segment spans residues 14–1307; the sequence is AVIGDLKCTT…GTYEYYVKWP (1294 aa). Residues 15–298 enclose the BetaCoV S1-NTD domain; that stretch reads VIGDLKCTTV…DFMSEIKCKT (284 aa). Cystine bridges form between Cys-21/Cys-165, Cys-160/Cys-193, Cys-172/Cys-252, Cys-286/Cys-296, and Cys-331/Cys-356. 2 N-linked (GlcNAc...) asparagine; by host glycosylation sites follow: Asn-59 and Asn-133. Asn-198 carries N-linked (GlcNAc...) asparagine; by host glycosylation. Residues 329–617 form the BetaCoV S1-CTD domain; sequence PDCNIEAWLN…DVNSGTTCST (289 aa). N-linked (GlcNAc...) asparagine; by host glycosylation is present at Asn-359. Intrachain disulfides connect Cys-374/Cys-427 and Cys-386/Cys-615. Residues Asn-437, Asn-649, Asn-676, Asn-696, Asn-714, Asn-739, and Asn-788 are each glycosylated (N-linked (GlcNAc...) asparagine; by host). Fusion peptide stretches follow at residues 914–935 and 933–953; these read SAIEDLLFSKVKLSDVGFVEAY and EAYNNCTGGAEIRDLICVQSY. Asn-937 carries an N-linked (GlcNAc...) asparagine; by host glycan. Cys-938 and Cys-949 are oxidised to a cystine. Residues 1014–1064 form a heptad repeat 1 region; that stretch reads QKLIANAFNNALGAIQEGFDATNSALVKIQAVVNANAETLNNLLQQLSNRF. The stretch at 1043 to 1087 forms a coiled coil; it reads QAVVNANAETLNNLLQQLSNRFGAISSSLQEILSRLDALEAQAQI. N-linked (GlcNAc...) asparagine; by host glycosylation is found at Asn-1194, Asn-1224, Asn-1234, Asn-1253, Asn-1267, and Asn-1288. Residues 1258–1296 form a heptad repeat 2 region; sequence APDLSLDYINVTFLDLQDEMNRLQEAIKVLNQSYINLKD. Positions 1269–1297 form a coiled coil; sequence TFLDLQDEMNRLQEAIKVLNQSYINLKDI. The chain crosses the membrane as a helical span at residues 1308–1328; the sequence is WYVWLLIGFAGVAMLVLLFFI. Residues 1329–1363 are Cytoplasmic-facing; that stretch reads CCCTGCGTSCFKKCGGCCDDYTGHQELVIKTSHED. The KxHxx motif lies at 1359–1363; sequence TSHED.

Belongs to the betacoronaviruses spike protein family. In terms of assembly, homotrimer; each monomer consists of a S1 and a S2 subunit. The resulting peplomers protrude from the virus surface as spikes. In terms of processing, specific enzymatic cleavages in vivo yield mature proteins. The precursor is processed into S1 and S2 by host cell furin or another cellular protease to yield the mature S1 and S2 proteins. Additionally, a second cleavage leads to the release of a fusion peptide after viral attachment to host cell receptor. The cytoplasmic Cys-rich domain is palmitoylated. Spike glycoprotein is digested within host endosomes.

It is found in the virion membrane. It localises to the host endoplasmic reticulum-Golgi intermediate compartment membrane. The protein localises to the host cell membrane. In terms of biological role, attaches the virion to the cell membrane by interacting with host receptor, initiating the infection. Functionally, mediates fusion of the virion and cellular membranes by acting as a class I viral fusion protein. Under the current model, the protein has at least three conformational states: pre-fusion native state, pre-hairpin intermediate state, and post-fusion hairpin state. During viral and target cell membrane fusion, the coiled coil regions (heptad repeats) assume a trimer-of-hairpins structure, positioning the fusion peptide in close proximity to the C-terminal region of the ectodomain. The formation of this structure appears to drive apposition and subsequent fusion of viral and target cell membranes. Its function is as follows. Acts as a viral fusion peptide which is unmasked following S2 cleavage occurring upon virus endocytosis. This is Spike glycoprotein from Bovine coronavirus (strain 98TXSF-110-LUN) (BCoV-LUN).